Here is a 460-residue protein sequence, read N- to C-terminus: Bifunctional protein GlmU (460 aa).

A pyrophosphorylase region spans residues 1–230 (MSNNYAIILA…FDESLGVNDR (230 aa)). Residues 9–12 (LAAG), Lys-23, Gln-73, and 78–79 (GT) contribute to the UDP-N-acetyl-alpha-D-glucosamine site. Asp-103 serves as a coordination point for Mg(2+). UDP-N-acetyl-alpha-D-glucosamine contacts are provided by Gly-140, Glu-155, Asn-170, and Asn-228. Residue Asn-228 coordinates Mg(2+). A linker region spans residues 231–251 (VALATAEAVMRKRINEKHMVN). Residues 252-460 (GVTFINPDAT…TRFPFHPSQK (209 aa)) form an N-acetyltransferase region. UDP-N-acetyl-alpha-D-glucosamine contacts are provided by Arg-333 and Lys-351. His-363 functions as the Proton acceptor in the catalytic mechanism. Residues Tyr-366 and Asn-377 each contribute to the UDP-N-acetyl-alpha-D-glucosamine site. Acetyl-CoA contacts are provided by residues Ala-380, 386–387 (NY), Ser-405, Ala-423, and Arg-440.

In the N-terminal section; belongs to the N-acetylglucosamine-1-phosphate uridyltransferase family. The protein in the C-terminal section; belongs to the transferase hexapeptide repeat family. In terms of assembly, homotrimer. Requires Mg(2+) as cofactor.

It localises to the cytoplasm. The enzyme catalyses alpha-D-glucosamine 1-phosphate + acetyl-CoA = N-acetyl-alpha-D-glucosamine 1-phosphate + CoA + H(+). It carries out the reaction N-acetyl-alpha-D-glucosamine 1-phosphate + UTP + H(+) = UDP-N-acetyl-alpha-D-glucosamine + diphosphate. It participates in nucleotide-sugar biosynthesis; UDP-N-acetyl-alpha-D-glucosamine biosynthesis; N-acetyl-alpha-D-glucosamine 1-phosphate from alpha-D-glucosamine 6-phosphate (route II): step 2/2. Its pathway is nucleotide-sugar biosynthesis; UDP-N-acetyl-alpha-D-glucosamine biosynthesis; UDP-N-acetyl-alpha-D-glucosamine from N-acetyl-alpha-D-glucosamine 1-phosphate: step 1/1. The protein operates within bacterial outer membrane biogenesis; LPS lipid A biosynthesis. Its function is as follows. Catalyzes the last two sequential reactions in the de novo biosynthetic pathway for UDP-N-acetylglucosamine (UDP-GlcNAc). The C-terminal domain catalyzes the transfer of acetyl group from acetyl coenzyme A to glucosamine-1-phosphate (GlcN-1-P) to produce N-acetylglucosamine-1-phosphate (GlcNAc-1-P), which is converted into UDP-GlcNAc by the transfer of uridine 5-monophosphate (from uridine 5-triphosphate), a reaction catalyzed by the N-terminal domain. The sequence is that of Bifunctional protein GlmU from Streptococcus suis (strain 98HAH33).